The chain runs to 315 residues: 4-hydroxy-3-methylbut-2-enyl diphosphate reductase (315 aa).

C12 contacts [4Fe-4S] cluster. (2E)-4-hydroxy-3-methylbut-2-enyl diphosphate contacts are provided by H43 and H81. H43 and H81 together coordinate dimethylallyl diphosphate. Isopentenyl diphosphate contacts are provided by H43 and H81. C103 serves as a coordination point for [4Fe-4S] cluster. H131 lines the (2E)-4-hydroxy-3-methylbut-2-enyl diphosphate pocket. H131 contributes to the dimethylallyl diphosphate binding site. Position 131 (H131) interacts with isopentenyl diphosphate. The active-site Proton donor is E133. T170 serves as a coordination point for (2E)-4-hydroxy-3-methylbut-2-enyl diphosphate. C198 lines the [4Fe-4S] cluster pocket. Residues S226, N228, and S271 each coordinate (2E)-4-hydroxy-3-methylbut-2-enyl diphosphate. Residues S226, N228, and S271 each coordinate dimethylallyl diphosphate. Isopentenyl diphosphate contacts are provided by S226, N228, and S271.

The protein belongs to the IspH family. Requires [4Fe-4S] cluster as cofactor.

It carries out the reaction isopentenyl diphosphate + 2 oxidized [2Fe-2S]-[ferredoxin] + H2O = (2E)-4-hydroxy-3-methylbut-2-enyl diphosphate + 2 reduced [2Fe-2S]-[ferredoxin] + 2 H(+). It catalyses the reaction dimethylallyl diphosphate + 2 oxidized [2Fe-2S]-[ferredoxin] + H2O = (2E)-4-hydroxy-3-methylbut-2-enyl diphosphate + 2 reduced [2Fe-2S]-[ferredoxin] + 2 H(+). The protein operates within isoprenoid biosynthesis; dimethylallyl diphosphate biosynthesis; dimethylallyl diphosphate from (2E)-4-hydroxy-3-methylbutenyl diphosphate: step 1/1. Its pathway is isoprenoid biosynthesis; isopentenyl diphosphate biosynthesis via DXP pathway; isopentenyl diphosphate from 1-deoxy-D-xylulose 5-phosphate: step 6/6. In terms of biological role, catalyzes the conversion of 1-hydroxy-2-methyl-2-(E)-butenyl 4-diphosphate (HMBPP) into a mixture of isopentenyl diphosphate (IPP) and dimethylallyl diphosphate (DMAPP). Acts in the terminal step of the DOXP/MEP pathway for isoprenoid precursor biosynthesis. The sequence is that of 4-hydroxy-3-methylbut-2-enyl diphosphate reductase from Anoxybacillus flavithermus (strain DSM 21510 / WK1).